The primary structure comprises 342 residues: MYTLARQLLFKLSPETSHELSIDLIGAGGRLGLNRLLTPKPASLPVSVLGLEFPNPVGLAAGLDKNGDAIDGFGQLGFGFIEIGTVTPRPQPGNPRPRLFRLPQANAIINRMGFNNHGVDHLLARVRAAKYRGVLGINIGKNFDTPVERAVDDYLICLDKVYADASYVTVNVSSPNTPGLRSLQFGDSLKQLLEALRQRQEALALRHGRRVPLAIKIAPDMTDEETALVAAALVEAGMDAVIATNTTLGREGVEGLPHGDEAGGLSGAPVREKSTHTVKVLAGELGGRLPIIAAGGITEGAHAAEKIAAGASLVQIYSGFIYKGPALIREAVDAIAALPRRN.

FMN contacts are provided by residues 61 to 65 (AGLDK) and Thr85. Lys65 provides a ligand contact to substrate. Substrate is bound at residue 110–114 (NRMGF). FMN is bound by residues Asn138 and Asn171. Asn171 is a binding site for substrate. Catalysis depends on Ser174, which acts as the Nucleophile. Asn176 provides a ligand contact to substrate. Positions 216 and 244 each coordinate FMN. 245 to 246 (NT) serves as a coordination point for substrate. FMN contacts are provided by residues Gly267, Gly296, and 317–318 (YS).

The protein belongs to the dihydroorotate dehydrogenase family. Type 2 subfamily. In terms of assembly, monomer. FMN serves as cofactor.

It localises to the cell membrane. The catalysed reaction is (S)-dihydroorotate + a quinone = orotate + a quinol. The protein operates within pyrimidine metabolism; UMP biosynthesis via de novo pathway; orotate from (S)-dihydroorotate (quinone route): step 1/1. In terms of biological role, catalyzes the conversion of dihydroorotate to orotate with quinone as electron acceptor. In Pseudomonas aeruginosa (strain LESB58), this protein is Dihydroorotate dehydrogenase (quinone).